We begin with the raw amino-acid sequence, 76 residues long: DNA-directed RNA polymerase subunit Rpo10 (76 aa).

The Zn(2+) site is built by cysteine 16, cysteine 19, cysteine 53, and cysteine 54.

It belongs to the archaeal Rpo10/eukaryotic RPB10 RNA polymerase subunit family. As to quaternary structure, part of the RNA polymerase complex. The cofactor is Zn(2+).

It is found in the cytoplasm. It catalyses the reaction RNA(n) + a ribonucleoside 5'-triphosphate = RNA(n+1) + diphosphate. DNA-dependent RNA polymerase (RNAP) catalyzes the transcription of DNA into RNA using the four ribonucleoside triphosphates as substrates. This Archaeoglobus fulgidus (strain ATCC 49558 / DSM 4304 / JCM 9628 / NBRC 100126 / VC-16) protein is DNA-directed RNA polymerase subunit Rpo10.